Consider the following 501-residue polypeptide: Cobyric acid synthase (501 aa).

One can recognise a GATase cobBQ-type domain in the interval 252–443 (DLDVAVIDLD…LHGIFDNPYW (192 aa)). Cysteine 333 acts as the Nucleophile in catalysis. The active site involves histidine 435.

It belongs to the CobB/CobQ family. CobQ subfamily.

The protein operates within cofactor biosynthesis; adenosylcobalamin biosynthesis. In terms of biological role, catalyzes amidations at positions B, D, E, and G on adenosylcobyrinic A,C-diamide. NH(2) groups are provided by glutamine, and one molecule of ATP is hydrogenolyzed for each amidation. This chain is Cobyric acid synthase, found in Limosilactobacillus reuteri (strain DSM 20016) (Lactobacillus reuteri).